We begin with the raw amino-acid sequence, 258 residues long: MEGFNIGGKSLKSRLLVGTGKFASYDLMKQAIEGCGTQVVTMALRRVNLDHKEDNILEYIPKDTILLPNTSGARNAEEAIRIARLSRAMGCGDWVKIEVISDQKYLLPDNEETVKATEVLAKEGFIVLPYMNPDLMIAKRLESVGAAAVMPLGSPIGTNKGLQTKEMIRILIEEIKVPIIVDAGIGKPSQAAEAMEMGAEAVLVNTAIATAQNPVKMAKAFELAVRAGRLAFNGVTAPQAKVARASSPLTGFLHEGEA.

Lys-96 serves as the catalytic Schiff-base intermediate with DXP. 1-deoxy-D-xylulose 5-phosphate-binding positions include Gly-157, 183–184, and 205–206; these read AG and NT.

The protein belongs to the ThiG family. In terms of assembly, homotetramer. Forms heterodimers with either ThiH or ThiS.

The protein resides in the cytoplasm. It carries out the reaction [ThiS sulfur-carrier protein]-C-terminal-Gly-aminoethanethioate + 2-iminoacetate + 1-deoxy-D-xylulose 5-phosphate = [ThiS sulfur-carrier protein]-C-terminal Gly-Gly + 2-[(2R,5Z)-2-carboxy-4-methylthiazol-5(2H)-ylidene]ethyl phosphate + 2 H2O + H(+). The protein operates within cofactor biosynthesis; thiamine diphosphate biosynthesis. Catalyzes the rearrangement of 1-deoxy-D-xylulose 5-phosphate (DXP) to produce the thiazole phosphate moiety of thiamine. Sulfur is provided by the thiocarboxylate moiety of the carrier protein ThiS. In vitro, sulfur can be provided by H(2)S. The polypeptide is Thiazole synthase (Alkaliphilus metalliredigens (strain QYMF)).